We begin with the raw amino-acid sequence, 233 residues long: 28 kDa ribonucleoprotein, chloroplastic (233 aa).

The segment covering 1–16 (CVAQTSEWEQEGSTNA) has biased composition (polar residues). The interval 1–52 (CVAQTSEWEQEGSTNAVLEGESDPEGAVSWGSETQVSDEGGVEGGQGFSEPP) is disordered. 2 consecutive RRM domains span residues 55-133 (AKLF…KAAP) and 149-227 (CRVY…VAEE).

The protein localises to the plastid. Its subcellular location is the chloroplast. In terms of biological role, probably involved in the 3'-end processing of chloroplast mRNA's. This Spinacia oleracea (Spinach) protein is 28 kDa ribonucleoprotein, chloroplastic.